A 566-amino-acid polypeptide reads, in one-letter code: Arginine--tRNA ligase (566 aa).

A 'HIGH' region motif is present at residues 124–134 (ANPNGPLHIGH).

The protein belongs to the class-I aminoacyl-tRNA synthetase family.

It localises to the cytoplasm. It carries out the reaction tRNA(Arg) + L-arginine + ATP = L-arginyl-tRNA(Arg) + AMP + diphosphate. The chain is Arginine--tRNA ligase (argS) from Methanocaldococcus jannaschii (strain ATCC 43067 / DSM 2661 / JAL-1 / JCM 10045 / NBRC 100440) (Methanococcus jannaschii).